We begin with the raw amino-acid sequence, 184 residues long: Photosystem I assembly protein Ycf4 (184 aa).

2 consecutive transmembrane segments (helical) span residues 22-42 (FCWA…GTSS) and 57-77 (IIFF…LFIS).

The protein belongs to the Ycf4 family.

It is found in the plastid. The protein resides in the chloroplast thylakoid membrane. Functionally, seems to be required for the assembly of the photosystem I complex. This chain is Photosystem I assembly protein Ycf4, found in Platanus occidentalis (Sycamore).